The following is a 943-amino-acid chain: UvrABC system protein A (943 aa).

31-38 (GLSGSGKS) contributes to the ATP binding site. A C4-type zinc finger spans residues 253-280 (CPHCGYSVPELEPRLFSFNNPAGACPTC). ABC transporter domains follow at residues 310-587 (WDRR…PNSI) and 607-937 (LDKK…RFLK). 640–647 (GVSGSGKS) provides a ligand contact to ATP. Residues 740–766 (CEACQGDGVLKVEMHFLPDVYVPCDQC) form a C4-type zinc finger.

The protein belongs to the ABC transporter superfamily. UvrA family. In terms of assembly, forms a heterotetramer with UvrB during the search for lesions.

Its subcellular location is the cytoplasm. Functionally, the UvrABC repair system catalyzes the recognition and processing of DNA lesions. UvrA is an ATPase and a DNA-binding protein. A damage recognition complex composed of 2 UvrA and 2 UvrB subunits scans DNA for abnormalities. When the presence of a lesion has been verified by UvrB, the UvrA molecules dissociate. The protein is UvrABC system protein A of Haemophilus influenzae (strain ATCC 51907 / DSM 11121 / KW20 / Rd).